Reading from the N-terminus, the 123-residue chain is DNA-directed RNA polymerase subunit omega (123 aa).

The interval 72–100 is disordered; that stretch reads QRVLPSEDEEDAAREERGQQMEALPAPPV.

Belongs to the RNA polymerase subunit omega family. In terms of assembly, the RNAP catalytic core consists of 2 alpha, 1 beta, 1 beta' and 1 omega subunit. When a sigma factor is associated with the core the holoenzyme is formed, which can initiate transcription.

The enzyme catalyses RNA(n) + a ribonucleoside 5'-triphosphate = RNA(n+1) + diphosphate. Its function is as follows. Promotes RNA polymerase assembly. Latches the N- and C-terminal regions of the beta' subunit thereby facilitating its interaction with the beta and alpha subunits. This chain is DNA-directed RNA polymerase subunit omega, found in Maricaulis maris (strain MCS10) (Caulobacter maris).